The chain runs to 572 residues: MSYNFILFVVFIFTLVIITKPLGTYIFKVFNNERTWLDWFAKPFQRVYLLILGESSKKEQSAKSYFFSLLSFSIMAFIFVFVVLLLQGLLPFNPQEIKGMGFSQAFNTAVSFVTNTNWQSYSGETGVSHFSQMLALAVQNFVSAAVGLCVAIVLIRSVARHEATKVGNFWNDLGKAIFWILLPISIIIAIVYIFQGVPQNIMAYLHVHTLAGSDQIIAQGPIASQEAIKSLGTNGGGFFNANSAHPYENPTIITNYIQMVSIFAIAAALTYTFGKWVGNTKQGWMIFAVMLVLFVISLMVMTISELHGLDFLHSKNIQDIYGQVGHLSNMEGKETRFGIFNSTLYNTVSTSASDGGVNSVMDSYSAIGGMMAMLNMAIGEVIFGGIGAGFYGFFMFLMLAVFIGSLMIGRAPSFLGKRIEANDMKWTMFALLISPCCVLVFTGLAAVIPSVHQALTNSGAHGFSEILYAYISGSNNNGSAFAGLAANTSYLNITIALSMLIGRFGVIFAVMMLAGSLVKKKRSSQMSEISSLDTTSFIFSVLVFFTIVLIGGLTIFPALSLGPILDQLNLNF.

10 helical membrane-spanning segments follow: residues 6–26, 66–86, 135–155, 177–197, 251–271, 283–303, 382–402, 428–448, 493–513, and 537–557; these read ILFV…GTYI, FFSL…VLLL, ALAV…IVLI, IFWI…FQGV, TIIT…ALTY, GWMI…VMTI, IFGG…LAVF, MFAL…AAVI, ITIA…VMML, and FIFS…TIFP.

Belongs to the KdpA family. As to quaternary structure, the system is composed of three essential subunits: KdpA, KdpB and KdpC.

It localises to the cell inner membrane. In terms of biological role, part of the high-affinity ATP-driven potassium transport (or Kdp) system, which catalyzes the hydrolysis of ATP coupled with the electrogenic transport of potassium into the cytoplasm. This subunit binds the periplasmic potassium ions and delivers the ions to the membrane domain of KdpB through an intramembrane tunnel. The sequence is that of Potassium-transporting ATPase potassium-binding subunit from Francisella philomiragia subsp. philomiragia (strain ATCC 25017 / CCUG 19701 / FSC 153 / O#319-036).